The sequence spans 213 residues: Adenylate kinase (213 aa).

10–15 (GSGKGT) provides a ligand contact to ATP. Positions 30–59 (SVGDLLRNIISSSSELGKKIKGTVESGNLI) are NMP. AMP contacts are provided by residues arginine 36, 57-59 (NLI), 83-86 (GFPR), and glutamine 90. Residues 125 to 160 (NRLACLDCKNIYSVSSFKSTTCAKCKSTRLEKRIDD) form an LID region. Position 126 (arginine 126) interacts with ATP. Zn(2+) contacts are provided by cysteine 129 and cysteine 132. Residue 135–136 (IY) coordinates ATP. Positions 146 and 149 each coordinate Zn(2+). The AMP site is built by arginine 157 and arginine 169. Residue leucine 195 participates in ATP binding.

Belongs to the adenylate kinase family. Monomer.

The protein localises to the cytoplasm. The enzyme catalyses AMP + ATP = 2 ADP. The protein operates within purine metabolism; AMP biosynthesis via salvage pathway; AMP from ADP: step 1/1. Functionally, catalyzes the reversible transfer of the terminal phosphate group between ATP and AMP. Plays an important role in cellular energy homeostasis and in adenine nucleotide metabolism. The polypeptide is Adenylate kinase (Wolbachia pipientis wMel).